An 85-amino-acid polypeptide reads, in one-letter code: Sodium channel neurotoxin MeuNaTxalpha-1 (85 aa).

The first 19 residues, 1 to 19 (MNSLVMISLALLVMTGVES), serve as a signal peptide directing secretion. Residues 21–83 (RDGYIADDKN…VPIKVSGKCN (63 aa)) enclose the LCN-type CS-alpha/beta domain. Positions 27–31 (DDKNC) are specificity module, loop 1. Intrachain disulfides connect Cys31/Cys82, Cys35/Cys55, Cys41/Cys65, and Cys45/Cys67. Specificity module, loop regions lie at residues 58-62 (AGQYG) and 75-83 (PIKVSGKCN). Asn83 is subject to Asparagine amide.

It belongs to the long (4 C-C) scorpion toxin superfamily. Sodium channel inhibitor family. Alpha subfamily. C-terminal amidation does not appear to play an important role in activity, since the non-amidated recombinant toxin and the native toxin (which is amidated) show similar activities on all sodium channels tested. As to expression, expressed by the venom gland.

Its subcellular location is the secreted. Functionally, alpha toxins bind voltage-independently at site-3 of sodium channels (Nav) and inhibit the inactivation of the activated channels, thereby blocking neuronal transmission. This toxin inhibits inactivation of Nav1.6/SCN8A (EC(50)=3.1 uM) and drosophila DmNav1 (EC(50)=1.17 uM). It also shows a weak inhibition of inactivation on Nav1.2/SCN2A Nav1.3/SCN3A, and Nav1.7/SCN9A. The toxin (1 uM) does not significantly shift the midpoint of activation at the two channels, but induces a significant depolarizing shift in the V(1/2) of inactivation of the channels. The toxin has also been shown to dose-dependently stimulates intracellular signaling in DRG neurons through activation of two kinases (type II protein kinase A (PKA-II) and MAP kinases 1/3 (MAPK1/MAPK3)). Nav1.2/SCN2A is strongly suggested to be the target channel predominantly involved in this activation. In vivo, the toxin induces a dose-dependent thermal hyperalgesia lasting 30-45 minutes. In Mesobuthus eupeus (Lesser Asian scorpion), this protein is Sodium channel neurotoxin MeuNaTxalpha-1.